Reading from the N-terminus, the 130-residue chain is Large ribosomal subunit protein bL20c (130 aa).

The protein belongs to the bacterial ribosomal protein bL20 family.

The protein localises to the plastid. It localises to the chloroplast. In terms of biological role, binds directly to 23S ribosomal RNA and is necessary for the in vitro assembly process of the 50S ribosomal subunit. It is not involved in the protein synthesizing functions of that subunit. This chain is Large ribosomal subunit protein bL20c (rpl20), found in Glycine max (Soybean).